The primary structure comprises 166 residues: Small ribosomal subunit protein uS5 (166 aa).

The 64-residue stretch at 12–75 folds into the S5 DRBM domain; the sequence is YIEKLVQVNR…EAARRNMIQV (64 aa).

Belongs to the universal ribosomal protein uS5 family. Part of the 30S ribosomal subunit. Contacts proteins S4 and S8.

In terms of biological role, with S4 and S12 plays an important role in translational accuracy. Its function is as follows. Located at the back of the 30S subunit body where it stabilizes the conformation of the head with respect to the body. The protein is Small ribosomal subunit protein uS5 of Pseudomonas putida (strain ATCC 700007 / DSM 6899 / JCM 31910 / BCRC 17059 / LMG 24140 / F1).